Reading from the N-terminus, the 335-residue chain is Glycerol-3-phosphate dehydrogenase [NAD(P)+] (335 aa).

Residues serine 10, phenylalanine 11, arginine 31, and lysine 105 each contribute to the NADPH site. Residues lysine 105, glycine 136, and serine 138 each coordinate sn-glycerol 3-phosphate. Alanine 140 serves as a coordination point for NADPH. Sn-glycerol 3-phosphate-binding residues include lysine 191, aspartate 244, serine 254, arginine 255, and asparagine 256. The active-site Proton acceptor is the lysine 191. Arginine 255 contributes to the NADPH binding site. The NADPH site is built by valine 279 and glutamate 281.

This sequence belongs to the NAD-dependent glycerol-3-phosphate dehydrogenase family.

It is found in the cytoplasm. The enzyme catalyses sn-glycerol 3-phosphate + NAD(+) = dihydroxyacetone phosphate + NADH + H(+). The catalysed reaction is sn-glycerol 3-phosphate + NADP(+) = dihydroxyacetone phosphate + NADPH + H(+). It functions in the pathway membrane lipid metabolism; glycerophospholipid metabolism. Its function is as follows. Catalyzes the reduction of the glycolytic intermediate dihydroxyacetone phosphate (DHAP) to sn-glycerol 3-phosphate (G3P), the key precursor for phospholipid synthesis. The chain is Glycerol-3-phosphate dehydrogenase [NAD(P)+] from Leptospira borgpetersenii serovar Hardjo-bovis (strain L550).